The following is a 291-amino-acid chain: U3 small nucleolar ribonucleoprotein protein IMP4 (291 aa).

The region spanning 83–264 is the Brix domain; it reads PKVMITTSRD…LYMIRLGTLE (182 aa).

In terms of assembly, part of the small subunit (SSU) processome, composed of more than 70 proteins and the RNA chaperone small nucleolar RNA (snoRNA) U3. Component of a heterotrimeric complex containing IMP3, IMP4 and MPHOSPH10. Interacts with MPHOSPH10.

It is found in the nucleus. The protein resides in the nucleolus. Component of the 60-80S U3 small nucleolar ribonucleoprotein (U3 snoRNP). Required for the early cleavages during pre-18S ribosomal RNA processing. Part of the small subunit (SSU) processome, first precursor of the small eukaryotic ribosomal subunit. During the assembly of the SSU processome in the nucleolus, many ribosome biogenesis factors, an RNA chaperone and ribosomal proteins associate with the nascent pre-rRNA and work in concert to generate RNA folding, modifications, rearrangements and cleavage as well as targeted degradation of pre-ribosomal RNA by the RNA exosome. In Homo sapiens (Human), this protein is U3 small nucleolar ribonucleoprotein protein IMP4.